The sequence spans 757 residues: Cartilage oligomeric matrix protein (757 aa).

Positions 1-20 are cleaved as a signal peptide; that stretch reads MVPDTACVLLLTLAALGASG. The segment at 22–86 is COMP N-terminal; sequence GQSPLGSDLG…SVRTGLPSVR (65 aa). The EGF-like 1 domain maps to 87–126; the sequence is PLLHCAPGFCFPGVACIQTESGARCGPCPAGFTGNGSHCT. 21 cysteine pairs are disulfide-bonded: C91/C102, C96/C111, C114/C125, C131/C142, C136/C151, C154/C178, C184/C197, C191/C206, C209/C221, C229/C243, C237/C253, C255/C266, C282/C287, C292/C312, C328/C348, C351/C371, C387/C407, C410/C430, C448/C468, C484/C504, and C520/C741. N-linked (GlcNAc...) asparagine glycosylation occurs at N121. Residues 127–179 enclose the EGF-like 2; calcium-binding domain; that stretch reads DVNECNAHPCFPRVRCINTSPGFRCEACPPGYSGPTHQGVGLAFAKANKQVCT. The EGF-like 3; calcium-binding domain maps to 180–222; that stretch reads DINECETGQHNCVPNSVCINTRGSFQCGPCQPGFVGDQASGCQ. In terms of domain architecture, EGF-like 4 spans 225–267; it reads AQRFCPDGSPSECHEHADCVLERDGSRSCVCAVGWAGNGILCG. 8 TSP type-3 repeats span residues 268–300, 301–336, 337–359, 360–395, 396–418, 419–456, 457–492, and 493–528; these read RDTD…NSGQ, EDVD…NPDQ, RNTD…NDDQ, KDTD…NSDQ, KDSD…NPDQ, ADVD…NSAQ, EDSD…NPGQ, and EDAD…EVTL. A disordered region spans residues 298 to 503; sequence SGQEDVDRDG…DADRDGVGDV (206 aa). Basic and acidic residues-rich tracts occupy residues 334-346 and 352-370; these read PDQR…KWGD and RSQK…RGDA. The Cell attachment site signature appears at 367–369; it reads RGD. Positions 467-476 are enriched in acidic residues; that stretch reads ACDDDDDNDG. Residues 527 to 757 form a mediates cell survival and induction of the IAP family of survival proteins region; the sequence is TLTDFRAFQT…DYETHQLRQA (231 aa). Residues 532-746 form the TSP C-terminal domain; that stretch reads RAFQTVVLDP…LRYRCNDTIP (215 aa). N-linked (GlcNAc...) asparagine glycosylation occurs at N742.

This sequence belongs to the thrombospondin family. Pentamer; disulfide-linked. Exists in a more compact conformation in the presence of calcium and shows a more extended conformation in the absence of calcium. Interacts with ITGB3, ITGA5 and FN1. Binding to FN1 requires the presence of divalent cations (Ca(2+), Mg(2+) or Mn(2+)). The greatest amount of binding is seen in the presence of Mn(2+). Interacts with MATN1, MATN3, MATN4 and ACAN. Binds heparin, heparan sulfate and chondroitin sulfate. EDTA dimishes significantly its binding to ACAN and abolishes its binding to MATN3, MATN4 and chondroitin sulfate. Interacts with collagen I, II and IX, and interaction with these collagens is dependent on the presence of zinc ions. Interacts with ADAMTS12. Interacts with ITGA7. Ca(2+) is required as a cofactor. In terms of processing, proteolytically cleaved by metalloproteases ADAMTS4 and ADAMTS1 with ADAMTS4 showing more potent activity. In terms of tissue distribution, abundantly expressed in the chondrocyte extracellular matrix, and is also found in bone, tendon, ligament and synovium and blood vessels. Increased amounts are produced during late stages of osteoarthritis in the area adjacent to the main defect.

It localises to the secreted. It is found in the extracellular space. The protein localises to the extracellular matrix. In terms of biological role, plays a role in the structural integrity of cartilage via its interaction with other extracellular matrix proteins such as the collagens and fibronectin. Can mediate the interaction of chondrocytes with the cartilage extracellular matrix through interaction with cell surface integrin receptors. Could play a role in the pathogenesis of osteoarthritis. Potent suppressor of apoptosis in both primary chondrocytes and transformed cells. Suppresses apoptosis by blocking the activation of caspase-3 and by inducing the IAP family of survival proteins (BIRC3, BIRC2, BIRC5 and XIAP). Essential for maintaining a vascular smooth muscle cells (VSMCs) contractile/differentiated phenotype under physiological and pathological stimuli. Maintains this phenotype of VSMCs by interacting with ITGA7. The sequence is that of Cartilage oligomeric matrix protein from Homo sapiens (Human).